Here is a 125-residue protein sequence, read N- to C-terminus: Small ribosomal subunit protein uS12 (125 aa).

Asp89 bears the 3-methylthioaspartic acid mark.

The protein belongs to the universal ribosomal protein uS12 family. Part of the 30S ribosomal subunit. Contacts proteins S8 and S17. May interact with IF1 in the 30S initiation complex.

With S4 and S5 plays an important role in translational accuracy. Its function is as follows. Interacts with and stabilizes bases of the 16S rRNA that are involved in tRNA selection in the A site and with the mRNA backbone. Located at the interface of the 30S and 50S subunits, it traverses the body of the 30S subunit contacting proteins on the other side and probably holding the rRNA structure together. The combined cluster of proteins S8, S12 and S17 appears to hold together the shoulder and platform of the 30S subunit. The sequence is that of Small ribosomal subunit protein uS12 from Clostridium kluyveri (strain ATCC 8527 / DSM 555 / NBRC 12016 / NCIMB 10680 / K1).